We begin with the raw amino-acid sequence, 767 residues long: AMP deaminase 3 (767 aa).

Phosphoserine occurs at positions 85 and 107. Disordered regions lie at residues Gln-89 to Pro-111 and Leu-181 to Gln-205. Residues His-317 and His-319 each contribute to the Zn(2+) site. Residues His-319 and Lys-388–Tyr-393 each bind substrate. His-586 contacts Zn(2+). Residue Glu-589 coordinates substrate. His-608 functions as the Proton acceptor in the catalytic mechanism. Asp-663 provides a ligand contact to Zn(2+). Asp-664–Gln-667 provides a ligand contact to substrate.

Belongs to the metallo-dependent hydrolases superfamily. Adenosine and AMP deaminases family. Homotetramer. Requires Zn(2+) as cofactor.

It carries out the reaction AMP + H2O + H(+) = IMP + NH4(+). It participates in purine metabolism; IMP biosynthesis via salvage pathway; IMP from AMP: step 1/1. AMP deaminase plays a critical role in energy metabolism. This Homo sapiens (Human) protein is AMP deaminase 3.